Reading from the N-terminus, the 500-residue chain is Cytochrome P450 2D16 (500 aa).

Ser-249 is modified (phosphoserine). Cys-446 serves as a coordination point for heme.

It belongs to the cytochrome P450 family. Requires heme as cofactor. Expressed at high levels in the inner zone of the adrenal cortex.

It is found in the endoplasmic reticulum membrane. The protein localises to the microsome membrane. The catalysed reaction is an organic molecule + reduced [NADPH--hemoprotein reductase] + O2 = an alcohol + oxidized [NADPH--hemoprotein reductase] + H2O + H(+). Its function is as follows. Cytochromes P450 are a group of heme-thiolate monooxygenases. In liver microsomes, this enzyme is involved in an NADPH-dependent electron transport pathway. It oxidizes a variety of structurally unrelated compounds, including steroids, fatty acids, and xenobiotics. This chain is Cytochrome P450 2D16 (CYP2D16), found in Cavia porcellus (Guinea pig).